A 304-amino-acid polypeptide reads, in one-letter code: Methionyl-tRNA formyltransferase (304 aa).

S110–P113 provides a ligand contact to (6S)-5,6,7,8-tetrahydrofolate.

The protein belongs to the Fmt family.

The enzyme catalyses L-methionyl-tRNA(fMet) + (6R)-10-formyltetrahydrofolate = N-formyl-L-methionyl-tRNA(fMet) + (6S)-5,6,7,8-tetrahydrofolate + H(+). In terms of biological role, attaches a formyl group to the free amino group of methionyl-tRNA(fMet). The formyl group appears to play a dual role in the initiator identity of N-formylmethionyl-tRNA by promoting its recognition by IF2 and preventing the misappropriation of this tRNA by the elongation apparatus. This Gluconobacter oxydans (strain 621H) (Gluconobacter suboxydans) protein is Methionyl-tRNA formyltransferase.